A 491-amino-acid chain; its full sequence is Chromosomal replication initiator protein DnaA (491 aa).

The domain I, interacts with DnaA modulators stretch occupies residues Met1–Glu86. The tract at residues Glu86–Thr150 is domain II. The domain III, AAA+ region stretch occupies residues Ser151–Ala367. Positions 195, 197, 198, and 199 each coordinate ATP. Residues Ser368 to His491 form a domain IV, binds dsDNA region.

This sequence belongs to the DnaA family. In terms of assembly, oligomerizes as a right-handed, spiral filament on DNA at oriC.

Its subcellular location is the cytoplasm. Functionally, plays an essential role in the initiation and regulation of chromosomal replication. ATP-DnaA binds to the origin of replication (oriC) to initiate formation of the DNA replication initiation complex once per cell cycle. Binds the DnaA box (a 9 base pair repeat at the origin) and separates the double-stranded (ds)DNA. Forms a right-handed helical filament on oriC DNA; dsDNA binds to the exterior of the filament while single-stranded (ss)DNA is stabiized in the filament's interior. The ATP-DnaA-oriC complex binds and stabilizes one strand of the AT-rich DNA unwinding element (DUE), permitting loading of DNA polymerase. After initiation quickly degrades to an ADP-DnaA complex that is not apt for DNA replication. Binds acidic phospholipids. The polypeptide is Chromosomal replication initiator protein DnaA (Mycobacteroides abscessus (strain ATCC 19977 / DSM 44196 / CCUG 20993 / CIP 104536 / JCM 13569 / NCTC 13031 / TMC 1543 / L948) (Mycobacterium abscessus)).